Reading from the N-terminus, the 213-residue chain is MDTLWDISPPLSPATPVWPGDTPLSVERVWRMEAGSPVNVARLTLSPHTGAHCDAPLHYDADGAPIGAVPLDAYLGPCRVIHCVGAAPRVQPADVEAALDRVPPRVLLRTCAHASVERWDSDFCAVAPETIDLLAARGVKLIGIDTPSLDPQESKTMDAHHRVRAHRMAILEGIVLDDVPAGDYELIALPLKFTTLDASPVRAVLRALPGHSS.

Tryptophan 18 is a substrate binding site. 3 residues coordinate Zn(2+): histidine 48, histidine 52, and aspartate 54. Histidine 58 serves as the catalytic Proton donor/acceptor. 2 residues coordinate Zn(2+): histidine 160 and glutamate 172.

The protein belongs to the Cyclase 1 superfamily. KynB family. Homodimer. Zn(2+) serves as cofactor.

It catalyses the reaction N-formyl-L-kynurenine + H2O = L-kynurenine + formate + H(+). It functions in the pathway amino-acid degradation; L-tryptophan degradation via kynurenine pathway; L-kynurenine from L-tryptophan: step 2/2. Its function is as follows. Catalyzes the hydrolysis of N-formyl-L-kynurenine to L-kynurenine, the second step in the kynurenine pathway of tryptophan degradation. This is Kynurenine formamidase from Burkholderia vietnamiensis (strain G4 / LMG 22486) (Burkholderia cepacia (strain R1808)).